The sequence spans 111 residues: Small ribosomal subunit protein mS38 (111 aa).

Residues 82-99 (RKRKKKMKKHKLRKRRKR) show a composition bias toward basic residues. The tract at residues 82–111 (RKRKKKMKKHKLRKRRKREKAERRKLSQGR) is disordered. Over residues 100–111 (EKAERRKLSQGR) the composition is skewed to basic and acidic residues.

This sequence belongs to the mitochondrion-specific ribosomal protein mS38 family. In terms of assembly, component of the mitochondrial small ribosomal subunit (mt-SSU). Mature yeast 74S mitochondrial ribosomes consist of a small (37S) and a large (54S) subunit. The 37S small subunit contains a 15S ribosomal RNA (15S mt-rRNA) and 34 different proteins. The 54S large subunit contains a 21S rRNA (21S mt-rRNA) and 46 different proteins.

The protein localises to the mitochondrion. It localises to the mitochondrion inner membrane. Component of the mitochondrial ribosome (mitoribosome), a dedicated translation machinery responsible for the synthesis of mitochondrial genome-encoded proteins, including at least some of the essential transmembrane subunits of the mitochondrial respiratory chain. The mitoribosomes are attached to the mitochondrial inner membrane and translation products are cotranslationally integrated into the membrane. mS38 is also involved in the splicing of the COX1 mRNA. The sequence is that of Small ribosomal subunit protein mS38 (QRI5) from Saccharomyces cerevisiae (strain ATCC 204508 / S288c) (Baker's yeast).